The following is a 387-amino-acid chain: TSC22 domain family protein 4 (387 aa).

Disordered regions lie at residues 1-85 (MSGG…GEPY) and 135-232 (ISTP…RRDG). Positions 31 to 51 (PVPPALAGPPPRLPNGDPNPD) are enriched in pro residues. At threonine 57 the chain carries Phosphothreonine. 2 positions are modified to phosphoserine: serine 62 and serine 165. Threonine 183 bears the Phosphothreonine mark. Serine 187, serine 189, and serine 219 each carry phosphoserine. Threonine 223 carries the phosphothreonine modification. Residues serine 254, serine 258, and serine 271 each carry the phosphoserine modification. The leucine-zipper stretch occupies residues 336-357 (LKEQIRDLAERNAALEQENGLL). Serine 362 carries the phosphoserine modification. The segment at 368–387 (QLPSSGLPRLGPSAPNGPSI) is disordered.

Belongs to the TSC-22/Dip/Bun family. As to quaternary structure, forms a homodimer or heterodimer. Forms a heterodimer with TSC22D1 isoforms 1 and 2. Interacts with NRBP1. As to expression, expressed in the liver (at protein level). Expressed in Purkinje cells and proliferating cerebellar granular neurons (at protein level). Expressed in the cortex, medulla and papilla of the kidney.

It is found in the nucleus. The protein localises to the cytoplasm. Its subcellular location is the cell projection. The protein resides in the dendrite. It localises to the synapse. Functionally, binds DNA and acts as a transcriptional repressor. Involved in the regulation of systematic glucose homeostasis and insulin sensitivity, via transcriptional repression of downstream insulin signaling targets such as OBP2A/LCN13. Acts as a negative regulator of lipogenic gene expression in hepatocytes and thereby mediates the control of very low-density lipoprotein release. May play a role in neurite elongation and survival. This Mus musculus (Mouse) protein is TSC22 domain family protein 4.